Reading from the N-terminus, the 159-residue chain is Cytochrome c-type biogenesis protein CcmE (159 aa).

The Cytoplasmic portion of the chain corresponds to 1–7; that stretch reads MTRKGRR. Residues 8–28 form a helical; Signal-anchor for type II membrane protein membrane-spanning segment; sequence LVLIGAGLGVLALAAGLILSA. Residues 29–159 lie on the Periplasmic side of the membrane; the sequence is LNDTIVFFRS…AAPVQRAPGS (131 aa). Residues H121 and Y125 each contribute to the heme site. A disordered region spans residues 134 to 159; sequence LKKQGRWQEGGPAPGTAAPVQRAPGS.

The protein belongs to the CcmE/CycJ family.

It localises to the cell inner membrane. In terms of biological role, heme chaperone required for the biogenesis of c-type cytochromes. Transiently binds heme delivered by CcmC and transfers the heme to apo-cytochromes in a process facilitated by CcmF and CcmH. In Xanthobacter autotrophicus (strain ATCC BAA-1158 / Py2), this protein is Cytochrome c-type biogenesis protein CcmE.